The chain runs to 513 residues: Nitrate transporter 2.2 (513 aa).

Helical transmembrane passes span 38 to 58, 74 to 94, 98 to 118, 128 to 148, 158 to 178, 196 to 216, 247 to 265, 281 to 301, 323 to 343, 351 to 371, 383 to 403, and 419 to 439; these read WICF…APVI, VSAV…VDVV, YGAA…ALVT, FFIG…GTMF, AIAA…MPLI, AFFV…LLGI, LGNY…SFGV, FGLN…MNIF, LWVL…MGKV, IVIM…HFGI, VSGL…AIWF, and FVWM…IWFP.

This sequence belongs to the major facilitator superfamily. Nitrate/nitrite porter (TC 2.A.1.8) family.

Its subcellular location is the cell membrane. Its function is as follows. Involved in nitrate transport, but does not seem to be able to mediate transport by its own. Acts as a dual component transporter with NAR2 (system 2). Involved in a high affinity transport specific for nitrate. The protein is Nitrate transporter 2.2 of Chlamydomonas reinhardtii (Chlamydomonas smithii).